The sequence spans 124 residues: Ribonuclease VapC32 (124 aa).

The PINc domain occupies 2-112 (ILVDTSVWIE…TRDKRLKAAC (111 aa)). The Mg(2+) site is built by Asp5 and Asp86.

This sequence belongs to the PINc/VapC protein family. Mg(2+) serves as cofactor.

In terms of biological role, toxic component of a type II toxin-antitoxin (TA) system. An RNase. Its toxic effect is neutralized by coexpression with cognate antitoxin VapB32. This is Ribonuclease VapC32 from Mycobacterium tuberculosis (strain CDC 1551 / Oshkosh).